The following is a 521-amino-acid chain: MTQDKILILDFGSQVTQLIARRVREAHVYCELHSFDMPLDEIKAFNPKGIILSGGPNSVYESDYQADIGIFDLGIPVLGICYGMQFMAHHLGGEVTPGNQREFGYAQVKTIDSGLTRDIYDDAPNTLDVWMSHGDKVSKLPDGFAVIGDTPSCPIAMMENAEKQFYGIQFHPEVTHTKQGRALLNRFVLDICGAQPGWTMPNYIEEAVAKIREQVGSDEVILGLSGGVDSSVAAALIHRAIGDQLTCVFVDHGLLRLNEGKMVMDMFARNLGVKVIHVDAEGQFMAKLAGVTDPEKKRKIIGAEFIEVFDAEEKKLTNAKWLAQGTIYPDVIESAGAKTQKAHAIKSHHNVGGLPENMKLKLLEPLRDLFKDEVRELGVALGLPREMVYRHPFPGPGLGVRILGEVKKEYADLLRQADDIFIQELRNTTDENGTSWYDLTSQAFAVFLPVKSVGVMGDGRTYDYVVALRAVITSDFMTAHWAELPYSLLGRVSNRIINEVKGINRVVYDVSGKPPATIEWE.

In terms of domain architecture, Glutamine amidotransferase type-1 spans 5–197 (KILILDFGSQ…VLDICGAQPG (193 aa)). The Nucleophile role is filled by cysteine 81. Catalysis depends on residues histidine 171 and glutamate 173. Residues 198-390 (WTMPNYIEEA…LGLPREMVYR (193 aa)) form the GMPS ATP-PPase domain. 225–231 (SGGVDSS) lines the ATP pocket.

In terms of assembly, homodimer.

The enzyme catalyses XMP + L-glutamine + ATP + H2O = GMP + L-glutamate + AMP + diphosphate + 2 H(+). Its pathway is purine metabolism; GMP biosynthesis; GMP from XMP (L-Gln route): step 1/1. Functionally, catalyzes the synthesis of GMP from XMP. In Neisseria meningitidis serogroup C (strain 053442), this protein is GMP synthase [glutamine-hydrolyzing].